Reading from the N-terminus, the 216-residue chain is 3-isopropylmalate dehydratase small subunit (216 aa).

Belongs to the LeuD family. LeuD type 1 subfamily. In terms of assembly, heterodimer of LeuC and LeuD.

The catalysed reaction is (2R,3S)-3-isopropylmalate = (2S)-2-isopropylmalate. It functions in the pathway amino-acid biosynthesis; L-leucine biosynthesis; L-leucine from 3-methyl-2-oxobutanoate: step 2/4. Its function is as follows. Catalyzes the isomerization between 2-isopropylmalate and 3-isopropylmalate, via the formation of 2-isopropylmaleate. The polypeptide is 3-isopropylmalate dehydratase small subunit (Polaromonas sp. (strain JS666 / ATCC BAA-500)).